A 223-amino-acid polypeptide reads, in one-letter code: Arginine kinase (223 aa).

The region spanning 56–222 (FVISTRVRLI…LELIKIEKEM (167 aa)) is the Phosphagen kinase C-terminal domain. ATP-binding positions include 59 to 63 (STRVR) and His68. Residue Cys141 coordinates L-arginine. ATP contacts are provided by residues 150-154 (RASVH) and 175-180 (RGTRGE). Position 180 (Glu180) interacts with L-arginine.

The protein belongs to the ATP:guanido phosphotransferase family.

The enzyme catalyses L-arginine + ATP = N(omega)-phospho-L-arginine + ADP + H(+). In Chionoecetes opilio (Atlantic snow crab), this protein is Arginine kinase.